A 125-amino-acid polypeptide reads, in one-letter code: Desulfoferrodoxin homolog (125 aa).

The Fe cation site is built by Cys10, Cys13, Cys29, Cys30, His49, His69, His75, Cys116, and His119.

The protein belongs to the desulfoferrodoxin family. It depends on Fe(3+) as a cofactor. The cofactor is Cu(2+).

The chain is Desulfoferrodoxin homolog from Archaeoglobus fulgidus (strain ATCC 49558 / DSM 4304 / JCM 9628 / NBRC 100126 / VC-16).